A 364-amino-acid polypeptide reads, in one-letter code: Glutamate 5-kinase (364 aa).

Lys7 is a binding site for ATP. 3 residues coordinate substrate: Ser47, Asp134, and Asn146. ATP-binding positions include 166–167 (TD) and 209–215 (TGGIKTK). The PUA domain maps to 274-349 (QGTLHVDDGA…NRIKSTQYPV (76 aa)).

This sequence belongs to the glutamate 5-kinase family.

It localises to the cytoplasm. It catalyses the reaction L-glutamate + ATP = L-glutamyl 5-phosphate + ADP. It functions in the pathway amino-acid biosynthesis; L-proline biosynthesis; L-glutamate 5-semialdehyde from L-glutamate: step 1/2. In terms of biological role, catalyzes the transfer of a phosphate group to glutamate to form L-glutamate 5-phosphate. This is Glutamate 5-kinase from Prochlorococcus marinus (strain SARG / CCMP1375 / SS120).